A 326-amino-acid polypeptide reads, in one-letter code: Interleukin-1-binding protein (326 aa).

Positions 1 to 18 are cleaved as a signal peptide; it reads MSILPVIFLSIFFYSSFV. Ig-like domains are found at residues 24-115, 122-212, and 221-322; these read PECI…LNLT, SNID…RIVK, and PSTM…KTVT. The cysteines at positions 48 and 99 are disulfide-linked. Residues N80, N103, and N113 are each glycosylated (N-linked (GlcNAc...) asparagine; by host). The cysteines at positions 143 and 194 are disulfide-linked. Residues N206 and N237 are each glycosylated (N-linked (GlcNAc...) asparagine; by host). A disulfide bond links C242 and C309.

Belongs to the interleukin-1 receptor family. Interacts with mouse Il1b.

Its subcellular location is the secreted. May reduce the host inflammatory response by interacting with inteleukin-1 beta (Il1b) and thus decreasing the association between IL1B and its cellular receptor. In Vaccinia virus (strain Ankara) (VACV), this protein is Interleukin-1-binding protein (OPG201).